The sequence spans 321 residues: Ribosomal protein L11 methyltransferase (321 aa).

4 residues coordinate S-adenosyl-L-methionine: T150, G171, D193, and N256.

The protein belongs to the methyltransferase superfamily. PrmA family.

The protein localises to the cytoplasm. It carries out the reaction L-lysyl-[protein] + 3 S-adenosyl-L-methionine = N(6),N(6),N(6)-trimethyl-L-lysyl-[protein] + 3 S-adenosyl-L-homocysteine + 3 H(+). Functionally, methylates ribosomal protein L11. This chain is Ribosomal protein L11 methyltransferase, found in Herpetosiphon aurantiacus (strain ATCC 23779 / DSM 785 / 114-95).